The primary structure comprises 206 residues: Glycerol-3-phosphate acyltransferase (206 aa).

The next 6 helical transmembrane spans lie at 4-24 (TAFA…AVIV), 53-73 (LAAA…VALA), 86-106 (GIAL…FFGF), 116-136 (VGIL…TWLF), 137-157 (MAFV…LAPV), and 160-180 (FFIL…AIVV).

The protein belongs to the PlsY family. As to quaternary structure, probably interacts with PlsX.

It localises to the cell inner membrane. It catalyses the reaction an acyl phosphate + sn-glycerol 3-phosphate = a 1-acyl-sn-glycero-3-phosphate + phosphate. It participates in lipid metabolism; phospholipid metabolism. In terms of biological role, catalyzes the transfer of an acyl group from acyl-phosphate (acyl-PO(4)) to glycerol-3-phosphate (G3P) to form lysophosphatidic acid (LPA). This enzyme utilizes acyl-phosphate as fatty acyl donor, but not acyl-CoA or acyl-ACP. The sequence is that of Glycerol-3-phosphate acyltransferase from Chromobacterium violaceum (strain ATCC 12472 / DSM 30191 / JCM 1249 / CCUG 213 / NBRC 12614 / NCIMB 9131 / NCTC 9757 / MK).